Here is a 444-residue protein sequence, read N- to C-terminus: MIASPWHERRLNEDKKRRNDHRSPFQRDRARILHSAAFRRLQAKTQVLGVGMNDFYRTRLTHSLEVSQIGTGIRAQLKLKQPQHLPLFDSMSLIESLCLAHDIGHPPFGHGGEVALNYMMRNHGGFEGNGQTFRILTGLEPYTECFGMNLCRRTLLGVLKYPGLYSSLHHNSQQAEVNNIRQLKPADWPPVKGVFDDDKAILDWVLAPLIDSDRERFLQTHTAATGKHKRTRYKSLDCSIMELADDIAYAVHDLEDAIVMGIVSSFQWHSDVTETLKNSKDSWIREEFATIGDKLFSHHHHQRKDAIGTLVNGFVTAIDLKEDLAFTEPLLRFNAALDDEFDSALEVLKQFVYKFVIRKPEIQMLEYKGQQTVMELFEAFESDPERLLPTHTQERWRESHNKGLNCHRVIADYISGMTDEFAARLHQQLFSPKLGSMIELSHEL.

Residues 1–26 (MIASPWHERRLNEDKKRRNDHRSPFQ) are disordered. Residues 59–250 (RLTHSLEVSQ…MELADDIAYA (192 aa)) form the HD domain.

This sequence belongs to the dGTPase family. Type 2 subfamily.

The polypeptide is Deoxyguanosinetriphosphate triphosphohydrolase-like protein (Shewanella woodyi (strain ATCC 51908 / MS32)).